A 162-amino-acid chain; its full sequence is UPF0114 protein PFLU_5318 (162 aa).

The next 3 helical transmembrane spans lie at 15 to 35 (LLAPIYFGLSLGLLALALKFF), 53 to 73 (LILVLLSLIDMALVGGLLVMV), and 136 to 156 (LMWYVIIHMTFVVSAFAMGYL).

It belongs to the UPF0114 family.

It is found in the cell membrane. In Pseudomonas fluorescens (strain SBW25), this protein is UPF0114 protein PFLU_5318.